The primary structure comprises 620 residues: MAU2 chromatid cohesion factor homolog (620 aa).

TPR repeat units lie at residues 452–485 (GGFY…ANAE) and 492–525 (SCSL…ASKI).

It belongs to the SCC4/mau-2 family. As to quaternary structure, interacts with Nipped-B to form the cohesin loading complex.

The protein localises to the nucleus. Its subcellular location is the nucleoplasm. Its function is as follows. Required for association of the cohesin complex with chromatin during interphase. Plays a role in sister chromatid cohesion and normal progression through prometaphase. The chain is MAU2 chromatid cohesion factor homolog from Drosophila persimilis (Fruit fly).